A 131-amino-acid chain; its full sequence is uncharacterized protein (131 aa).

The CCHC-type; degenerate zinc-finger motif lies at 64 to 81 (VNCDKCGKPGNVKNDCPG).

This is an uncharacterized protein from Homo sapiens (Human).